Here is a 468-residue protein sequence, read N- to C-terminus: UDP-N-acetylmuramate--L-alanine ligase (468 aa).

114 to 120 provides a ligand contact to ATP; sequence GTHGKTT.

It belongs to the MurCDEF family.

The protein localises to the cytoplasm. The enzyme catalyses UDP-N-acetyl-alpha-D-muramate + L-alanine + ATP = UDP-N-acetyl-alpha-D-muramoyl-L-alanine + ADP + phosphate + H(+). It functions in the pathway cell wall biogenesis; peptidoglycan biosynthesis. In terms of biological role, cell wall formation. In Methylorubrum populi (strain ATCC BAA-705 / NCIMB 13946 / BJ001) (Methylobacterium populi), this protein is UDP-N-acetylmuramate--L-alanine ligase.